The following is a 297-amino-acid chain: Formylmethanofuran--tetrahydromethanopterin formyltransferase (297 aa).

Belongs to the FTR family. As to quaternary structure, homotetramer.

It localises to the cytoplasm. The catalysed reaction is N-formylmethanofuran + 5,6,7,8-tetrahydromethanopterin + H(+) = N(5)-formyl-5,6,7,8-tetrahydromethanopterin + methanofuran. It participates in one-carbon metabolism; methanogenesis from CO(2); 5,10-methenyl-5,6,7,8-tetrahydromethanopterin from CO(2): step 2/3. Catalyzes the reversible transfer of a formyl group from formylmethanofuran (formyl-MFR) to tetrahydromethanopterin (H(4)MPT) to produce 5-formyl tetrahydromethanopterin (5-formyl-H(4)MPT) and methanofuran (MFR). In Methanosarcina mazei (strain ATCC BAA-159 / DSM 3647 / Goe1 / Go1 / JCM 11833 / OCM 88) (Methanosarcina frisia), this protein is Formylmethanofuran--tetrahydromethanopterin formyltransferase.